The sequence spans 311 residues: Bifunctional protein FolD (311 aa).

NADP(+) contacts are provided by residues 184 to 186 (GAS), Ile209, and Ile250.

The protein belongs to the tetrahydrofolate dehydrogenase/cyclohydrolase family. As to quaternary structure, homodimer.

The catalysed reaction is (6R)-5,10-methylene-5,6,7,8-tetrahydrofolate + NADP(+) = (6R)-5,10-methenyltetrahydrofolate + NADPH. The enzyme catalyses (6R)-5,10-methenyltetrahydrofolate + H2O = (6R)-10-formyltetrahydrofolate + H(+). It functions in the pathway one-carbon metabolism; tetrahydrofolate interconversion. Its function is as follows. Catalyzes the oxidation of 5,10-methylenetetrahydrofolate to 5,10-methenyltetrahydrofolate and then the hydrolysis of 5,10-methenyltetrahydrofolate to 10-formyltetrahydrofolate. The sequence is that of Bifunctional protein FolD from Gluconacetobacter diazotrophicus (strain ATCC 49037 / DSM 5601 / CCUG 37298 / CIP 103539 / LMG 7603 / PAl5).